The chain runs to 642 residues: Putative ankyrin repeat protein L91 (642 aa).

ANK repeat units follow at residues 42 to 76 (HFTK…VKNP), 85 to 118 (EGWT…NPNI), 153 to 186 (NGFT…NVDS), 190 to 224 (NGET…TLHK), 227 to 256 (NGFT…DVNA), 260 to 288 (EGKS…EINH), 292 to 322 (NDIN…NPNE), 326 to 360 (NKNA…NPNI), 365 to 397 (SRTI…NVNA), 401 to 434 (EGRT…NVNH), 438 to 470 (DGAH…DVNI), 475 to 514 (KKWT…NVNA), 518 to 550 (YGNN…NVNH), and 554 to 587 (NGDT…NPNI).

This Acanthamoeba polyphaga (Amoeba) protein is Putative ankyrin repeat protein L91.